Here is a 168-residue protein sequence, read N- to C-terminus: Bifunctional protein PyrR (168 aa).

A PRPP-binding motif is present at residues 90–102 (LVLIDDVLMSGRT).

Belongs to the purine/pyrimidine phosphoribosyltransferase family. PyrR subfamily.

It catalyses the reaction UMP + diphosphate = 5-phospho-alpha-D-ribose 1-diphosphate + uracil. In terms of biological role, regulates the transcription of the pyrimidine nucleotide (pyr) operon in response to exogenous pyrimidines. Its function is as follows. Also displays a weak uracil phosphoribosyltransferase activity which is not physiologically significant. In Pseudomonas fluorescens (strain ATCC BAA-477 / NRRL B-23932 / Pf-5), this protein is Bifunctional protein PyrR.